We begin with the raw amino-acid sequence, 77 residues long: Conotoxin PnMKLT1-0122 (77 aa).

An N-terminal signal peptide occupies residues 1 to 22 (MKLTCMMIVAVLFLTAWTFATA). Residues 23–49 (EDPRNGLENLFSKAHHEMKNPEDSKLN) constitute a propeptide that is removed on maturation. 3 disulfide bridges follow: Cys-52–Cys-67, Cys-59–Cys-71, and Cys-66–Cys-76.

The protein belongs to the conotoxin O1 superfamily. As to expression, expressed by the venom duct.

Its subcellular location is the secreted. This is Conotoxin PnMKLT1-0122 from Conus pennaceus (Feathered cone).